The following is a 359-amino-acid chain: MDMESKKPYLMVTIIQVIYTIMFLISKAVFNGGMNTFVFVFYRQAFATIFLAPLAFFFERKSAPPLSFVTFIKIFMLSLFGVTLSLDLNGIALSYTSATLAAATTASLPAITFFLALLFGMERLKVKSIQGTAKLVGITVCMGGVIILAIYKGPLLKLPLCPHFYHGQEHPHRNNPGHVSGGSTSWLKGCVLMITSNILWGLWLVLQGRVLKVYPSKLYFTTLHCLLSSIQSFVIAIALERDISAWKLGWNLRLVAVIYCGFIVTGVAYYLQSWVIEKRGPVFLSMFTPLSLLFTLLSSAILLCEIISLGSIVGGLLLIIGLYCVLWGKSREEKNSGDDKIDLQKENDVVCNEVKVVIS.

10 helical membrane-spanning segments follow: residues 10–30, 37–57, 66–86, 100–120, 135–155, 186–206, 218–238, 256–276, 282–302, and 306–326; these read LMVTIIQVIYTIMFLISKAVF, FVFVFYRQAFATIFLAPLAFF, LSFVTFIKIFMLSLFGVTLSL, LAAATTASLPAITFFLALLFG, LVGITVCMGGVIILAIYKGPL, WLKGCVLMITSNILWGLWLVL, LYFTTLHCLLSSIQSFVIAIA, AVIYCGFIVTGVAYYLQSWVI, VFLSMFTPLSLLFTLLSSAIL, and IISLGSIVGGLLLIIGLYCVL. 2 consecutive EamA domains span residues 18-136 and 198-326; these read IYTI…AKLV and ILWG…YCVL.

Belongs to the drug/metabolite transporter (DMT) superfamily. Plant drug/metabolite exporter (P-DME) (TC 2.A.7.4) family.

Its subcellular location is the membrane. The polypeptide is WAT1-related protein At5g64700 (Arabidopsis thaliana (Mouse-ear cress)).